The following is a 430-amino-acid chain: Enolase (430 aa).

A (2R)-2-phosphoglycerate-binding site is contributed by Gln167. The active-site Proton donor is Glu209. Mg(2+) contacts are provided by Asp246, Glu287, and Asp314. Positions 339, 368, 369, and 390 each coordinate (2R)-2-phosphoglycerate. The active-site Proton acceptor is the Lys339.

Belongs to the enolase family. Requires Mg(2+) as cofactor.

The protein resides in the cytoplasm. It is found in the secreted. The protein localises to the cell surface. The catalysed reaction is (2R)-2-phosphoglycerate = phosphoenolpyruvate + H2O. It participates in carbohydrate degradation; glycolysis; pyruvate from D-glyceraldehyde 3-phosphate: step 4/5. Catalyzes the reversible conversion of 2-phosphoglycerate (2-PG) into phosphoenolpyruvate (PEP). It is essential for the degradation of carbohydrates via glycolysis. The sequence is that of Enolase from Prochlorococcus marinus (strain MIT 9301).